We begin with the raw amino-acid sequence, 103 residues long: Major carboxysome shell protein CsoS1 (103 aa).

The 86-residue stretch at 9-94 folds into the BMC domain; the sequence is ALGMIETRGL…PHREVEPALG (86 aa).

It belongs to the bacterial microcompartments protein family. CsoS1 subfamily. As to quaternary structure, homohexamer with a small central pore. A CsoS1-CsoS1D-CsoS2 complex can be isolated following expression in E.coli. Forms a CsoS2-CsoS1-RuBisCO complex.

Its subcellular location is the carboxysome. In terms of biological role, the major shell protein of the carboxysome, a polyhedral inclusion where RuBisCO (ribulose bisphosphate carboxylase, ccbL-ccbS) is sequestered. Assembles into hexamers which make sheets that form the facets of the polyhedral carboxysome. There are estimated to be 538 CsoS1 hexamers per carboxysome; note this number includes the probable carboxysome shell vertex proteins CsoS4A and CsoS4B. This chain is Major carboxysome shell protein CsoS1, found in Prochlorococcus marinus subsp. pastoris (strain CCMP1986 / NIES-2087 / MED4).